Consider the following 433-residue polypeptide: Glutamate-1-semialdehyde 2,1-aminomutase (433 aa).

At lysine 273 the chain carries N6-(pyridoxal phosphate)lysine.

The protein belongs to the class-III pyridoxal-phosphate-dependent aminotransferase family. HemL subfamily. In terms of assembly, homodimer. The cofactor is pyridoxal 5'-phosphate.

It is found in the cytoplasm. It carries out the reaction (S)-4-amino-5-oxopentanoate = 5-aminolevulinate. It participates in porphyrin-containing compound metabolism; protoporphyrin-IX biosynthesis; 5-aminolevulinate from L-glutamyl-tRNA(Glu): step 2/2. It functions in the pathway porphyrin-containing compound metabolism; chlorophyll biosynthesis. This Rippkaea orientalis (strain PCC 8801 / RF-1) (Cyanothece sp. (strain PCC 8801)) protein is Glutamate-1-semialdehyde 2,1-aminomutase.